We begin with the raw amino-acid sequence, 278 residues long: Protein saf1 (278 aa).

Disordered stretches follow at residues 1 to 43, 81 to 210, and 240 to 264; these read MLSK…RNMS, KKNI…DIEE, and QKLA…EDKD. 2 stretches are compositionally biased toward basic and acidic residues: residues 22 to 38 and 90 to 103; these read QIKV…ERLS and GRVE…AERQ. Basic residues-rich tracts occupy residues 104–116 and 169–183; these read HKPR…KNPK and REKK…HHKK. Residues 186–202 show a composition bias toward polar residues; the sequence is INASSAQPKSTTTTEAA.

It is found in the nucleus. Its subcellular location is the nucleolus. The polypeptide is Protein saf1 (saf1) (Schizosaccharomyces pombe (strain 972 / ATCC 24843) (Fission yeast)).